A 339-amino-acid chain; its full sequence is Ferrochelatase (339 aa).

Residues histidine 202 and glutamate 283 each contribute to the Fe cation site.

It belongs to the ferrochelatase family.

The protein resides in the cytoplasm. The catalysed reaction is heme b + 2 H(+) = protoporphyrin IX + Fe(2+). Its pathway is porphyrin-containing compound metabolism; protoheme biosynthesis; protoheme from protoporphyrin-IX: step 1/1. Functionally, catalyzes the ferrous insertion into protoporphyrin IX. The polypeptide is Ferrochelatase (Psychrobacter cryohalolentis (strain ATCC BAA-1226 / DSM 17306 / VKM B-2378 / K5)).